We begin with the raw amino-acid sequence, 422 residues long: L-cysteine:1D-myo-inositol 2-amino-2-deoxy-alpha-D-glucopyranoside ligase (422 aa).

Residues 1 to 34 (MKSWSTPAPPTVPSRPDRLRLHDTATGRTRHPGN) form a disordered region. The segment covering 15–25 (RPDRLRLHDTA) has biased composition (basic and acidic residues). Zn(2+) is bound at residue C44. Residues 44–47 (CGIT), T59, and 82–84 (NVT) each bind L-cysteinyl-5'-AMP. Positions 46–56 (ITPYDATHLGH) match the 'HIGH' region motif. The 'ERGGDP' region signature appears at 196–201 (ERGGDP). W237 contributes to the L-cysteinyl-5'-AMP binding site. C241 provides a ligand contact to Zn(2+). 259-261 (GSD) contributes to the L-cysteinyl-5'-AMP binding site. H266 contributes to the Zn(2+) binding site. V292 contacts L-cysteinyl-5'-AMP. A 'KMSKS' region motif is present at residues 298–302 (KMSKS).

Belongs to the class-I aminoacyl-tRNA synthetase family. MshC subfamily. In terms of assembly, monomer. Requires Zn(2+) as cofactor.

It carries out the reaction 1D-myo-inositol 2-amino-2-deoxy-alpha-D-glucopyranoside + L-cysteine + ATP = 1D-myo-inositol 2-(L-cysteinylamino)-2-deoxy-alpha-D-glucopyranoside + AMP + diphosphate + H(+). In terms of biological role, catalyzes the ATP-dependent condensation of GlcN-Ins and L-cysteine to form L-Cys-GlcN-Ins. This chain is L-cysteine:1D-myo-inositol 2-amino-2-deoxy-alpha-D-glucopyranoside ligase, found in Micrococcus luteus (strain ATCC 4698 / DSM 20030 / JCM 1464 / CCM 169 / CCUG 5858 / IAM 1056 / NBRC 3333 / NCIMB 9278 / NCTC 2665 / VKM Ac-2230) (Micrococcus lysodeikticus).